We begin with the raw amino-acid sequence, 92 residues long: Isoleucine--tRNA ligase (92 aa).

Positions 55, 58, 75, and 78 each coordinate Zn(2+).

It belongs to the class-I aminoacyl-tRNA synthetase family. IleS type 1 subfamily. In terms of assembly, monomer. The cofactor is Zn(2+).

It localises to the cytoplasm. It catalyses the reaction tRNA(Ile) + L-isoleucine + ATP = L-isoleucyl-tRNA(Ile) + AMP + diphosphate. Catalyzes the attachment of isoleucine to tRNA(Ile). As IleRS can inadvertently accommodate and process structurally similar amino acids such as valine, to avoid such errors it has two additional distinct tRNA(Ile)-dependent editing activities. One activity is designated as 'pretransfer' editing and involves the hydrolysis of activated Val-AMP. The other activity is designated 'posttransfer' editing and involves deacylation of mischarged Val-tRNA(Ile). This Klebsiella aerogenes (Enterobacter aerogenes) protein is Isoleucine--tRNA ligase (ileS).